A 246-amino-acid chain; its full sequence is Small ribosomal subunit protein uS3 (246 aa).

In terms of domain architecture, KH type-2 spans 19-98 (IDEWLAQNFY…NPMLDARVQA (80 aa)). A disordered region spans residues 218–246 (LQEETASTLREHMEAARPGEEHEEDREES). The span at 226-237 (LREHMEAARPGE) shows a compositional bias: basic and acidic residues.

Belongs to the universal ribosomal protein uS3 family. As to quaternary structure, part of the 30S ribosomal subunit.

Binds the lower part of the 30S subunit head. In Aeropyrum pernix (strain ATCC 700893 / DSM 11879 / JCM 9820 / NBRC 100138 / K1), this protein is Small ribosomal subunit protein uS3.